We begin with the raw amino-acid sequence, 325 residues long: Hydroxymethylglutaryl-CoA lyase, mitochondrial (325 aa).

The transit peptide at methionine 1–glycine 27 directs the protein to the mitochondrion. The 268-residue stretch at valine 33–leucine 300 folds into the Pyruvate carboxyltransferase domain. Arginine 41 serves as a coordination point for substrate. Aspartate 42 serves as a coordination point for a divalent metal cation. An N6-acetyllysine; alternate modification is found at lysine 48. N6-succinyllysine; alternate is present on lysine 48. Lysine 111 carries the N6-acetyllysine modification. Residues lysine 137 and lysine 179 each carry the N6-acetyllysine; alternate modification. 2 positions are modified to N6-succinyllysine; alternate: lysine 137 and lysine 179. A divalent metal cation is bound by residues histidine 233 and histidine 235. Cysteine 266 is a catalytic residue. Asparagine 275 serves as a coordination point for a divalent metal cation. A Microbody targeting signal motif is present at residues cysteine 323–leucine 325. Lysine 324 bears the N6-acetyllysine mark.

It belongs to the HMG-CoA lyase family. As to quaternary structure, homodimer; disulfide-linked. Can also form homotetramers. Requires a divalent metal cation as cofactor. In terms of tissue distribution, highest expression in liver. Expressed in pancreas, kidney, intestine, testis, fibroblasts and lymphoblasts. Very low expression in brain and skeletal muscle. The relative expression of isoform 2 (at mRNA level) is highest in heart (30%), skeletal muscle (22%), and brain (14%).

The protein localises to the mitochondrion matrix. The protein resides in the peroxisome. The enzyme catalyses (3S)-3-hydroxy-3-methylglutaryl-CoA = acetoacetate + acetyl-CoA. It participates in metabolic intermediate metabolism; (S)-3-hydroxy-3-methylglutaryl-CoA degradation; acetoacetate from (S)-3-hydroxy-3-methylglutaryl-CoA: step 1/1. Stimulated by reducing agents such as dithiothreitol (DTT). In terms of biological role, mitochondrial 3-hydroxy-3-methylglutaryl-CoA lyase that catalyzes a cation-dependent cleavage of (S)-3-hydroxy-3-methylglutaryl-CoA into acetyl-CoA and acetoacetate, a key step in ketogenesis. Terminal step in leucine catabolism. Ketone bodies (beta-hydroxybutyrate, acetoacetate and acetone) are essential as an alternative source of energy to glucose, as lipid precursors and as regulators of metabolism. This is Hydroxymethylglutaryl-CoA lyase, mitochondrial (HMGCL) from Homo sapiens (Human).